Reading from the N-terminus, the 478-residue chain is Sulfate adenylyltransferase subunit 1 (478 aa).

Positions 24–240 (KSMLRFLTCG…VLEDIDIDAD (217 aa)) constitute a tr-type G domain. Positions 33-40 (GSVDDGKS) are G1. 33-40 (GSVDDGKS) is a GTP binding site. Residues 91 to 95 (GITID) are G2. A G3 region spans residues 112–115 (DTPG). GTP contacts are provided by residues 112 to 116 (DTPGH) and 167 to 170 (NKMD). Residues 167 to 170 (NKMD) form a G4 region. The segment at 206-208 (SAL) is G5.

This sequence belongs to the TRAFAC class translation factor GTPase superfamily. Classic translation factor GTPase family. CysN/NodQ subfamily. In terms of assembly, heterodimer composed of CysD, the smaller subunit, and CysN.

The enzyme catalyses sulfate + ATP + H(+) = adenosine 5'-phosphosulfate + diphosphate. It functions in the pathway sulfur metabolism; hydrogen sulfide biosynthesis; sulfite from sulfate: step 1/3. With CysD forms the ATP sulfurylase (ATPS) that catalyzes the adenylation of sulfate producing adenosine 5'-phosphosulfate (APS) and diphosphate, the first enzymatic step in sulfur assimilation pathway. APS synthesis involves the formation of a high-energy phosphoric-sulfuric acid anhydride bond driven by GTP hydrolysis by CysN coupled to ATP hydrolysis by CysD. This chain is Sulfate adenylyltransferase subunit 1, found in Aliivibrio salmonicida (strain LFI1238) (Vibrio salmonicida (strain LFI1238)).